We begin with the raw amino-acid sequence, 560 residues long: Solute carrier family 22 member 6 (560 aa).

At 1–15 (MAFSDLLEQVGSTGR) the chain is on the cytoplasmic side. Residues 16–36 (FQVLHVTLLSMPILMMASHNL) traverse the membrane as a helical segment. At 37 to 143 (LQNFVAAVPP…LVCDYRALKQ (107 aa)) the chain is on the extracellular side. A helical transmembrane segment spans residues 144–164 (MSQTTYMGGVLVGAIVFGGLS). Residues 165–170 (DRFGRR) are Cytoplasmic-facing. The chain crosses the membrane as a helical span at residues 171–191 (VLLLISNLMMAIGGTCVAFST). Residues 192-201 (SFTMFCVFRV) are Extracellular-facing. Residues 202 to 222 (CCGMALSGLVLNSFSLIVEWI) form a helical membrane-spanning segment. The Cytoplasmic segment spans residues 223-228 (PTRVRT). The helical transmembrane segment at 229–249 (VVGTGTGYCYTTGQLILAAVA) threads the bilayer. Topologically, residues 250 to 256 (YCIRDWR) are extracellular. Residues 257-277 (WLTLAVSLPFYVSFLYSWWFL) form a helical membrane-spanning segment. Over 278 to 345 (ESARWLVLTK…DLLRTSTMRT (68 aa)) the chain is Cytoplasmic. Residues 346–366 (ITICLSAVWFSTSFAYYGLSM) form a helical membrane-spanning segment. Residues 367–374 (DLQKFGVS) lie on the Extracellular side of the membrane. Residues 375–395 (IYLIQIIFGAVDIPAKIIVTI) form a helical membrane-spanning segment. Topologically, residues 396–406 (CMSMLGRRPSQ) are cytoplasmic. The chain crosses the membrane as a helical span at residues 407 to 427 (CGALVLAGIMILINLLVPSDL). The Extracellular segment spans residues 428–433 (QMLRTS). A helical membrane pass occupies residues 434–454 (LAVIGKGCLAASFNCCYLYAG). Over 455–465 (ELYPTVIRQSG) the chain is Cytoplasmic. Residues 466-486 (MGWVSMMARFGAMVAPMVLLL) form a helical membrane-spanning segment. Topologically, residues 487 to 491 (GDDYP) are extracellular. The chain crosses the membrane as a helical span at residues 492 to 512 (WIPGFIYGGAPIVSGIFAFFL). Topologically, residues 513–560 (PETLSQPLPDTIQDIDDRGLARTNSKRLPEKLDLAMKDPSCVLLKESV) are cytoplasmic.

This sequence belongs to the major facilitator (TC 2.A.1) superfamily. Organic cation transporter (TC 2.A.1.19) family. In terms of processing, glycosylated. Glycosylation is necessary for proper targeting of the transporter to the plasma membrane.

The protein resides in the cell membrane. Its subcellular location is the basolateral cell membrane. The protein localises to the basal cell membrane. Functionally, involved in the renal elimination of endogenous and exogenous organic anions. Functions as organic anion exchanger when the uptake of one molecule of organic anion is coupled with an efflux of one molecule of endogenous dicarboxylic acid (glutarate, ketoglutarate, etc). Mediates the sodium-independent uptake of p-aminohippurate (PAH), 2,3-dimercapto-1-propanesulfonic acid (DMPS), cidofovir, adefovir, 9-(2-phosphonylmethoxyethyl) guanine (PMEG), 9-(2-phosphonylmethoxyethyl) diaminopurine (PMEDAP), ochratoxin (OTA), acyclovir (ACV), 3'-azido-3-'deoxythymidine (AZT), cimetidine (CMD), 2,4-dichloro-phenoxyacetate (2,4-D), hippurate (HA), indoleacetate (IA), indoxyl sulfate (IS) and 3-carboxy-4-methyl-5-propyl-2-furanpropionate (CMPF) and edaravone sulfate. PAH uptake is inhibited by p-chloromercuribenzenesulphonate (PCMBS), diethyl pyrocarbonate (DEPC), indomethacin, sulindac, diclofenac, carprofen, okadaic acid, benzothiazolylcysteine (BTC), S-chlorotrifluoroethylcysteine (CTFC), cysteine S-conjugates S-dichlorovinylcysteine (DCVC), furosemide, steviol, phorbol 12-myristate 13-acetate (PMA), calcium ionophore A23187, benzylpenicillin, bumetamide, losartan, probenecid, phenol red, urate, glutarate and alpha-ketoglutarate. The polypeptide is Solute carrier family 22 member 6 (slc22a6) (Danio rerio (Zebrafish)).